A 430-amino-acid polypeptide reads, in one-letter code: MSVRLWDKGGATDAQMLRYTSRDDWQLDQRLLAYDLRATIAHVRGLARIGVLSEAERDALVRELEVLSAQNEAGELRLTEDDEDGHSAIEAALVARIGDAGKKVHTGRSRNDQVLVATRLYERDALDELAENAAAGARALLDLARREAETPMPGYTHLQRAVPSSVGYWAASFVEGLADAIDVVRATRALVDRCPLGGAAGFGVNLPLDRVGVARELGFAGVALNPLASQTSRGIIEAQILAAAWQVMAVSRRLAWDLSLFAMSELAFIRLPEAFTTGSSIMPQKRNPDVVELMRAACSVVQGALAEVQSIVALPSGYHRDLQLTKGPTMRGLDEALATSRLLPRLVEGLAFDRERMARAITPECFATDRAVELAVEGVPFREAYRKVAAEIAALPAGDAAASLRARVSLGAPGNLALDDLARRLDRHAR.

Belongs to the lyase 1 family. Argininosuccinate lyase subfamily.

The protein resides in the cytoplasm. The catalysed reaction is 2-(N(omega)-L-arginino)succinate = fumarate + L-arginine. Its pathway is amino-acid biosynthesis; L-arginine biosynthesis; L-arginine from L-ornithine and carbamoyl phosphate: step 3/3. This chain is Argininosuccinate lyase, found in Sorangium cellulosum (strain So ce56) (Polyangium cellulosum (strain So ce56)).